Reading from the N-terminus, the 170-residue chain is Phosphopantetheine adenylyltransferase (170 aa).

Residue S14 participates in substrate binding. ATP is bound by residues S14–F15 and H22. Substrate is bound by residues K46, L79, and R93. ATP-binding positions include G94–R96, E104, and I129–T135.

Belongs to the bacterial CoaD family. In terms of assembly, homohexamer. It depends on Mg(2+) as a cofactor.

It localises to the cytoplasm. It carries out the reaction (R)-4'-phosphopantetheine + ATP + H(+) = 3'-dephospho-CoA + diphosphate. The protein operates within cofactor biosynthesis; coenzyme A biosynthesis; CoA from (R)-pantothenate: step 4/5. In terms of biological role, reversibly transfers an adenylyl group from ATP to 4'-phosphopantetheine, yielding dephospho-CoA (dPCoA) and pyrophosphate. The sequence is that of Phosphopantetheine adenylyltransferase from Neisseria meningitidis serogroup C (strain 053442).